The sequence spans 463 residues: NF-kappa-B-activating protein (463 aa).

Residues 1 to 14 are compositionally biased toward basic residues; the sequence is MRSRSRSRSRQRER. Residues 1–358 form a disordered region; sequence MRSRSRSRSR…GGSLNQKDFG (358 aa). Composition is skewed to basic and acidic residues over residues 15–29 and 39–71; these read RRSD…ERRT and VSRE…DAVP. The segment covering 78 to 98 has biased composition (low complexity); the sequence is SSPSRSSSSSSSDRSSSSRSP. A compositionally biased stretch (basic and acidic residues) spans 107–125; that stretch reads KSVERWPNDRYHENNDRRQ. 3 positions are modified to phosphoserine: Ser-136, Ser-189, and Ser-191. Thr-195 is subject to Phosphothreonine. Residues 208–238 are compositionally biased toward basic residues; sequence PKKKKKKGKRKHKKSEKKSKKKSKKSKKKKS. Positions 241-267 are enriched in low complexity; the sequence is ESSSSSSSSSSEDSSDESSSSSSSSSS. Acidic residues predominate over residues 268 to 278; that stretch reads DSEDESEEEDV. Positions 279–288 are enriched in basic and acidic residues; the sequence is WLEKTADGIK. Residues 289-312 are compositionally biased toward basic residues; the sequence is KPKKKKSSTSKKDKKSKKKKKKRK. The span at 330–340 shows a compositional bias: basic and acidic residues; it reads KNKESASHNDE.

This sequence belongs to the NKAP family.

The protein localises to the nucleus. Tumor suppressor involved in maintaining genome integrity. Influences gene expression and mRNA splicing. This Drosophila melanogaster (Fruit fly) protein is NF-kappa-B-activating protein.